The sequence spans 146 residues: UPF0178 protein BCE33L2782 (146 aa).

It belongs to the UPF0178 family.

The chain is UPF0178 protein BCE33L2782 from Bacillus cereus (strain ZK / E33L).